Consider the following 1062-residue polypeptide: Carbamoyl phosphate synthase large chain (1062 aa).

The segment at 1 to 401 (MPKRTDIHKI…AMQKAVRSLE (401 aa)) is carboxyphosphate synthetic domain. Arg-129, Arg-169, Gly-175, Gly-176, Lys-208, Ile-210, Glu-215, Gly-241, Ile-242, His-243, Gln-284, and Glu-298 together coordinate ATP. An ATP-grasp 1 domain is found at 133-327 (KELCKELGEP…IAKMAAKIAI (195 aa)). Positions 284, 298, and 300 each coordinate Mg(2+). 3 residues coordinate Mn(2+): Gln-284, Glu-298, and Asn-300. Positions 402 to 546 (IDEKDLYSET…YSTYDGENES (145 aa)) are oligomerization domain. The segment at 547-929 (HKSGKKSVIV…ALYKAFAGAK (383 aa)) is carbamoyl phosphate synthetic domain. In terms of domain architecture, ATP-grasp 2 spans 671-861 (DQIIKKLKLN…MAQVATRVIM (191 aa)). Arg-707, Asp-746, Leu-748, Glu-752, Gly-777, Val-778, His-779, Ser-780, Gln-820, and Glu-832 together coordinate ATP. Mg(2+) contacts are provided by Gln-820, Glu-832, and Asn-834. Positions 820, 832, and 834 each coordinate Mn(2+). The MGS-like domain occupies 930–1062 (MQLPENGNVL…NRSFATDALK (133 aa)). The segment at 930 to 1062 (MQLPENGNVL…NRSFATDALK (133 aa)) is allosteric domain.

This sequence belongs to the CarB family. Composed of two chains; the small (or glutamine) chain promotes the hydrolysis of glutamine to ammonia, which is used by the large (or ammonia) chain to synthesize carbamoyl phosphate. Tetramer of heterodimers (alpha,beta)4. Mg(2+) serves as cofactor. Mn(2+) is required as a cofactor.

It catalyses the reaction hydrogencarbonate + L-glutamine + 2 ATP + H2O = carbamoyl phosphate + L-glutamate + 2 ADP + phosphate + 2 H(+). The enzyme catalyses hydrogencarbonate + NH4(+) + 2 ATP = carbamoyl phosphate + 2 ADP + phosphate + 2 H(+). It functions in the pathway amino-acid biosynthesis; L-arginine biosynthesis; carbamoyl phosphate from bicarbonate: step 1/1. Its pathway is pyrimidine metabolism; UMP biosynthesis via de novo pathway; (S)-dihydroorotate from bicarbonate: step 1/3. In terms of biological role, large subunit of the glutamine-dependent carbamoyl phosphate synthetase (CPSase). CPSase catalyzes the formation of carbamoyl phosphate from the ammonia moiety of glutamine, carbonate, and phosphate donated by ATP, constituting the first step of 2 biosynthetic pathways, one leading to arginine and/or urea and the other to pyrimidine nucleotides. The large subunit (synthetase) binds the substrates ammonia (free or transferred from glutamine from the small subunit), hydrogencarbonate and ATP and carries out an ATP-coupled ligase reaction, activating hydrogencarbonate by forming carboxy phosphate which reacts with ammonia to form carbamoyl phosphate. The chain is Carbamoyl phosphate synthase large chain from Lactobacillus johnsonii (strain CNCM I-12250 / La1 / NCC 533).